A 389-amino-acid polypeptide reads, in one-letter code: Na(+)/H(+) antiporter NhaA 1 (389 aa).

The next 12 membrane-spanning stretches (helical) occupy residues 12–32 (VLNE…ALLV), 62–82 (FLLW…GLEL), 97–117 (IVLP…LFVL), 128–148 (GWAI…MMCG), 157–177 (IFLL…IAIF), 184–204 (IVAF…NILG), 220–240 (ISVL…AFFI), 260–280 (FWLA…VNLS), 282–302 (IDIG…LFVG), 305–325 (AGVF…LPQG), 331–351 (LYGV…IDGL), and 365–385 (LAIL…LKFF).

The protein belongs to the NhaA Na(+)/H(+) (TC 2.A.33) antiporter family.

The protein resides in the cell inner membrane. It catalyses the reaction Na(+)(in) + 2 H(+)(out) = Na(+)(out) + 2 H(+)(in). In terms of biological role, na(+)/H(+) antiporter that extrudes sodium in exchange for external protons. This Campylobacter jejuni subsp. jejuni serotype O:23/36 (strain 81-176) protein is Na(+)/H(+) antiporter NhaA 1.